The chain runs to 449 residues: tRNA(Ile)-lysidine synthase (449 aa).

35-40 (SGGIDS) serves as a coordination point for ATP.

The protein belongs to the tRNA(Ile)-lysidine synthase family.

Its subcellular location is the cytoplasm. The catalysed reaction is cytidine(34) in tRNA(Ile2) + L-lysine + ATP = lysidine(34) in tRNA(Ile2) + AMP + diphosphate + H(+). In terms of biological role, ligates lysine onto the cytidine present at position 34 of the AUA codon-specific tRNA(Ile) that contains the anticodon CAU, in an ATP-dependent manner. Cytidine is converted to lysidine, thus changing the amino acid specificity of the tRNA from methionine to isoleucine. This is tRNA(Ile)-lysidine synthase from Coxiella burnetii (strain RSA 493 / Nine Mile phase I).